The sequence spans 224 residues: Proteasome subunit beta (224 aa).

The propeptide at 1–6 is removed in mature form; by autocatalysis; the sequence is MDVMKG. Thr7 (nucleophile) is an active-site residue.

The protein belongs to the peptidase T1B family. In terms of assembly, the 20S proteasome core is composed of 14 alpha and 14 beta subunits that assemble into four stacked heptameric rings, resulting in a barrel-shaped structure. The two inner rings, each composed of seven catalytic beta subunits, are sandwiched by two outer rings, each composed of seven alpha subunits. The catalytic chamber with the active sites is on the inside of the barrel. Has a gated structure, the ends of the cylinder being occluded by the N-termini of the alpha-subunits. Is capped at one or both ends by the proteasome regulatory ATPase, PAN.

The protein localises to the cytoplasm. The enzyme catalyses Cleavage of peptide bonds with very broad specificity.. Its activity is regulated as follows. The formation of the proteasomal ATPase PAN-20S proteasome complex, via the docking of the C-termini of PAN into the intersubunit pockets in the alpha-rings, triggers opening of the gate for substrate entry. Interconversion between the open-gate and close-gate conformations leads to a dynamic regulation of the 20S proteasome proteolysis activity. In terms of biological role, component of the proteasome core, a large protease complex with broad specificity involved in protein degradation. This chain is Proteasome subunit beta, found in Methanocaldococcus fervens (strain DSM 4213 / JCM 15782 / AG86) (Methanococcus fervens).